The following is a 91-amino-acid chain: Molybdopterin synthase sulfur carrier subunit (91 aa).

Glycine 91 carries the post-translational modification 1-thioglycine; alternate. The residue at position 91 (glycine 91) is a Glycyl adenylate; alternate.

It belongs to the MoaD family. MOCS2A subfamily. In terms of assembly, heterotetramer; composed of 2 small (MOCS2A) and 2 large (MOCS2B) subunits. C-terminal thiocarboxylation occurs in 2 steps, it is first acyl-adenylated (-COAMP) via the hesA/moeB/thiF part of uba4, then thiocarboxylated (-COSH) via the rhodanese domain of uba4.

The protein localises to the cytoplasm. It participates in cofactor biosynthesis; molybdopterin biosynthesis. Functionally, acts as a sulfur carrier required for molybdopterin biosynthesis. Component of the molybdopterin synthase complex that catalyzes the conversion of precursor Z into molybdopterin by mediating the incorporation of 2 sulfur atoms into precursor Z to generate a dithiolene group. In the complex, serves as sulfur donor by being thiocarboxylated (-COSH) at its C-terminus by uba4. After interaction with MOCS2B, the sulfur is then transferred to precursor Z to form molybdopterin. In Emericella nidulans (strain FGSC A4 / ATCC 38163 / CBS 112.46 / NRRL 194 / M139) (Aspergillus nidulans), this protein is Molybdopterin synthase sulfur carrier subunit.